Reading from the N-terminus, the 416-residue chain is Glutamyl-tRNA reductase (416 aa).

Substrate is bound by residues 49–52 (TCNR), Ser-105, 110–112 (EPQ), and Gln-116. Cys-50 acts as the Nucleophile in catalysis. 185–190 (GAGETI) lines the NADP(+) pocket.

This sequence belongs to the glutamyl-tRNA reductase family. Homodimer.

The catalysed reaction is (S)-4-amino-5-oxopentanoate + tRNA(Glu) + NADP(+) = L-glutamyl-tRNA(Glu) + NADPH + H(+). It functions in the pathway porphyrin-containing compound metabolism; protoporphyrin-IX biosynthesis; 5-aminolevulinate from L-glutamyl-tRNA(Glu): step 1/2. Catalyzes the NADPH-dependent reduction of glutamyl-tRNA(Glu) to glutamate 1-semialdehyde (GSA). This is Glutamyl-tRNA reductase from Shewanella halifaxensis (strain HAW-EB4).